A 616-amino-acid chain; its full sequence is Zinc metalloproteinase-disintegrin-like protein H3 (616 aa).

The first 20 residues, 1–20, serve as a signal peptide directing secretion; that stretch reads MIQVLLVIICLAVFPYQGSS. Residues 21–193 constitute a propeptide that is removed on maturation; sequence IILESGNVND…KKASQLNLTP (173 aa). Glu-194 carries the pyrrolidone carboxylic acid (Glu) modification. The region spanning 203–399 is the Peptidase M12B domain; the sequence is KYIKLVIVAD…KMPQCILNKP (197 aa). 3 disulfides stabilise this stretch: Cys-314–Cys-394, Cys-354–Cys-378, and Cys-356–Cys-361. Position 339 (His-339) interacts with Zn(2+). Residues 339–350 carry the Metal-binding motif; sequence HEMGHNLGMDHD. Glu-340 acts as the Proton acceptor in catalysis. Zn(2+) is bound by residues His-343 and His-349. An N-linked (GlcNAc...) asparagine glycan is attached at Asn-377. One can recognise a Disintegrin domain in the interval 407–493; the sequence is PAVCGNYLVE…ECPTDQFQRN (87 aa). 5 residues coordinate Ca(2+): Val-409, Asn-412, Glu-416, Glu-419, and Asp-422. Cystine bridges form between Cys-410–Cys-439, Cys-421–Cys-434, Cys-423–Cys-429, Cys-433–Cys-456, Cys-447–Cys-453, Cys-452–Cys-478, Cys-465–Cys-485, Cys-472–Cys-504, Cys-497–Cys-509, Cys-516–Cys-566, Cys-531–Cys-577, Cys-544–Cys-554, Cys-561–Cys-603, and Cys-597–Cys-609. The D/ECD-tripeptide motif lies at 471–473; that stretch reads ECD. Positions 473, 476, and 488 each coordinate Ca(2+). An N-linked (GlcNAc...) asparagine glycan is attached at Asn-506.

It belongs to the venom metalloproteinase (M12B) family. P-III subfamily. P-IIIc sub-subfamily. As to quaternary structure, homodimer; disulfide-linked. The cofactor is Zn(2+). N-glycosylated. Post-translationally, the N-terminus is blocked. Expressed by the venom gland (at protein level). Expressed by the venom gland.

It localises to the secreted. The proteolytic activity requires Zn(2+) and Ca(2+) ions. The alpha-fibrinogenase activity is completely inhibited by EDTA, but not by PMSF. In terms of biological role, zinc metalloprotease that has fibrinogenolytic and hemorrhagic activities. Cleaves insulin B chain readily at '38-Ala-|-Leu-39' bond, and at a significantly slower rate, at '40-Tyr-|-Leu-41' bond. Hydrolyzes isolated extracellular matrix (ECM) bovine fibronectin, and basal membrane (BM) proteins human collagen IV and, to a lesser extent, murine laminin, in vitro. Cleaves murine nidogen (at '350-Ser-|-Phe-351' and '380-Tyr-|-Asn-381' bonds), but not laminin, in a solubilized BM preparation. Hydrolyzes plasma proteins involved in blood coagulation in vitro. It significantly prolongs thrombin time. Has potent alpha-fibrinogenase activity cleaving human fibrinogen alpha chain at '432-Lys-|-Leu-433' bond, but does not cleave beta or gamma chains. Hydrolyzes bovine prothrombin, but does not cleave it at '366-Arg-|-Ile-367' bond, which is necessary for the formation of active alpha-thrombin, however, the cleavage of fragment 1 from it leads to reduced alpha-thrombin formation. Hydrolyzes bovine factor X heavy chain at '211-Ser-|-Leu-212', '213-Asp-|-Leu-214' and '216-Gly-|-Leu-217' bonds activating it only marginally as does not cleave at the physiological activation site. Does not cleave factor X light chain. No hydrolysis or activation of plasminogen. The alpha-fibrinogenase activity likely contributes to its hemorrhagic activity, which in rat can be completely neutralized in vivo by anti-ammodytagin antibodies, which strongly cross-react with this protein. Has very weak collagen-, ADP- and ristocetin-induced platelet aggregation inhibition activity in vitro. The protein is Zinc metalloproteinase-disintegrin-like protein H3 of Vipera ammodytes ammodytes (Western sand viper).